A 336-amino-acid polypeptide reads, in one-letter code: Succinylglutamate desuccinylase (336 aa).

Positions 59, 62, and 151 each coordinate Zn(2+). The active site involves Glu215.

This sequence belongs to the AspA/AstE family. Succinylglutamate desuccinylase subfamily. Requires Zn(2+) as cofactor.

The enzyme catalyses N-succinyl-L-glutamate + H2O = L-glutamate + succinate. Its pathway is amino-acid degradation; L-arginine degradation via AST pathway; L-glutamate and succinate from L-arginine: step 5/5. In terms of biological role, transforms N(2)-succinylglutamate into succinate and glutamate. In Pseudomonas fluorescens (strain Pf0-1), this protein is Succinylglutamate desuccinylase.